A 281-amino-acid chain; its full sequence is Insulin-like growth factor-binding protein 7 (281 aa).

Residues 1 to 25 (MERPPRALLLGAAGLLLLLLPLSSS) form the signal peptide. Residues 27-113 (SSDACGPCVP…PATLAVCVCK (87 aa)) enclose the IGFBP N-terminal domain. Cystine bridges form between Cys-31–Cys-56, Cys-34–Cys-58, Cys-39–Cys-59, Cys-47–Cys-62, Cys-70–Cys-86, Cys-80–Cys-110, Cys-112–Cys-130, and Cys-119–Cys-155. One can recognise a Kazal-like domain in the interval 98-157 (GAAAGGPATLAVCVCKSRYPVCGSNGITYPSGCQLRAASLRAESRGEKAITQVSKGTCEQ). The region spanning 159–263 (PSIVTPPKDI…GQASAAAKIT (105 aa)) is the Ig-like C2-type domain. N-linked (GlcNAc...) asparagine glycosylation occurs at Asn-170. The cysteines at positions 180 and 247 are disulfide-linked. Position 238 is a phosphoserine (Ser-238).

In terms of assembly, may interact with VPS24/CHMP3; the relevance of such interaction however remains unclear. Interacts with CD93; this interaction plays a role in endothelial cells angiogenesis. Post-translationally, N-glycosylated. In terms of tissue distribution, expressed at high levels in lung, kidney, small intestine, testis and uterus and at moderate levels in liver.

It is found in the secreted. Its function is as follows. Binds IGF1 and IGF2 with a relatively low affinity. Stimulates prostacyclin (PGI2) production. Stimulates cell adhesion. Acts as a ligand for CD93 to play a role in angiogenesis. In Mus musculus (Mouse), this protein is Insulin-like growth factor-binding protein 7 (Igfbp7).